A 567-amino-acid polypeptide reads, in one-letter code: Urease subunit alpha (567 aa).

In terms of domain architecture, Urease spans 129 to 567; sequence GGVDTHIHFI…LPMAQRYFLF (439 aa). Ni(2+) contacts are provided by H134, H136, and K217. K217 is subject to N6-carboxylysine. H219 is a binding site for substrate. Ni(2+) contacts are provided by H246 and H272. The Proton donor role is filled by H320. D360 is a Ni(2+) binding site.

Belongs to the metallo-dependent hydrolases superfamily. Urease alpha subunit family. In terms of assembly, heterotrimer of UreA (gamma), UreB (beta) and UreC (alpha) subunits. Three heterotrimers associate to form the active enzyme. Ni cation serves as cofactor. In terms of processing, carboxylation allows a single lysine to coordinate two nickel ions.

Its subcellular location is the cytoplasm. The enzyme catalyses urea + 2 H2O + H(+) = hydrogencarbonate + 2 NH4(+). It participates in nitrogen metabolism; urea degradation; CO(2) and NH(3) from urea (urease route): step 1/1. This chain is Urease subunit alpha, found in Aliivibrio fischeri (strain MJ11) (Vibrio fischeri).